The chain runs to 769 residues: Integrin beta-8 (769 aa).

The N-terminal stretch at 1–42 (MCGSALAFFTAAFVCLQNDRRGPASFLWAAWVFSLVLGLGQG) is a signal peptide. Residues 43-684 (EDNRCASSNA…ECFSSPSYLR (642 aa)) are Extracellular-facing. The PSI domain occupies 46 to 95 (RCASSNAASCARCLALGPECGWCVQEDFISGGSRSERCDIVSNLISKGCS). 25 disulfide bridges follow: C47/C65, C55/C469, C58/C83, C68/C94, C211/C218, C266/C307, C407/C419, C439/C467, C471/C491, C471/C494, C481/C494, C499/C528, C511/C526, C520/C531, C533/C546, C553/C567, C561/C572, C574/C583, C585/C609, C593/C607, C601/C612, C614/C624, C627/C630, C634/C661, and C640/C657. Residues 146-384 (PVDLYYLVDV…NLVVEAYQKL (239 aa)) form the VWFA domain. Mg(2+) contacts are provided by D154 and S156. D193 lines the Ca(2+) pocket. N-linked (GlcNAc...) asparagine glycosylation is present at N233. 4 residues coordinate Ca(2+): N249, D251, P253, and E254. Mg(2+) is bound at residue E254. N402 carries an N-linked (GlcNAc...) asparagine glycan. N-linked (GlcNAc...) asparagine glycans are attached at residues N421, N431, N456, and N466. I-EGF domains follow at residues 471 to 495 (CEDN…FQCD), 499 to 547 (CHFD…KYCE), 548 to 584 (KDDF…DRCQ), and 585 to 625 (CPSA…RFCE). N648 is a glycosylation site (N-linked (GlcNAc...) asparagine). The helical transmembrane segment at 685-704 (IFFIIFIVTFLIGLLKVLII) threads the bilayer. The Cytoplasmic segment spans residues 705–769 (RQVILQWNSN…NAHETFRCNF (65 aa)).

This sequence belongs to the integrin beta chain family. Heterodimer of an alpha and a beta subunit. Beta-8 (ITGB8) associates with alpha-V (ITGAV) to form ITGAV:ITGB8. ITGAV:ITGB8 interacts with TGFB1. Placenta, kidney, brain, ovary, uterus and in several transformed cells. Transiently expressed in 293 human embryonic kidney cells.

It localises to the cell membrane. Its function is as follows. Integrin alpha-V:beta-8 (ITGAV:ITGB8) is a receptor for fibronectin. It recognizes the sequence R-G-D in its ligands. Integrin alpha-V:beta-6 (ITGAV:ITGB6) mediates R-G-D-dependent release of transforming growth factor beta-1 (TGF-beta-1) from regulatory Latency-associated peptide (LAP), thereby playing a key role in TGF-beta-1 activation on the surface of activated regulatory T-cells (Tregs). Required during vasculogenesis. The protein is Integrin beta-8 of Homo sapiens (Human).